A 527-amino-acid polypeptide reads, in one-letter code: ARS-binding protein 2 (527 aa).

Disordered stretches follow at residues 160-184 (PDVNSSSISTMRTSTSPSNWIHSAS), 219-265 (SHHM…NSHN), and 282-344 (IDPD…IKRL). Residues 164-177 (SSSISTMRTSTSPS) are compositionally biased toward low complexity. Positions 225-239 (RGSQQAHQTTPQNHS) are enriched in polar residues. Residues 284 to 303 (PDWHQWPDDLRDVSSPKESD) show a composition bias toward basic and acidic residues. Phosphoserine occurs at positions 297, 298, and 302. A compositionally biased stretch (basic residues) spans 328–343 (PRKRGRPPGARNKIKR).

It is found in the nucleus. In terms of biological role, binds, preferentially, to the Maundrell ARS consensus sequence within ARS3002. The polypeptide is ARS-binding protein 2 (abp2) (Schizosaccharomyces pombe (strain 972 / ATCC 24843) (Fission yeast)).